Reading from the N-terminus, the 490-residue chain is Aspartyl/glutamyl-tRNA(Asn/Gln) amidotransferase subunit B (490 aa).

This sequence belongs to the GatB/GatE family. GatB subfamily. In terms of assembly, heterotrimer of A, B and C subunits.

It catalyses the reaction L-glutamyl-tRNA(Gln) + L-glutamine + ATP + H2O = L-glutaminyl-tRNA(Gln) + L-glutamate + ADP + phosphate + H(+). The catalysed reaction is L-aspartyl-tRNA(Asn) + L-glutamine + ATP + H2O = L-asparaginyl-tRNA(Asn) + L-glutamate + ADP + phosphate + 2 H(+). In terms of biological role, allows the formation of correctly charged Asn-tRNA(Asn) or Gln-tRNA(Gln) through the transamidation of misacylated Asp-tRNA(Asn) or Glu-tRNA(Gln) in organisms which lack either or both of asparaginyl-tRNA or glutaminyl-tRNA synthetases. The reaction takes place in the presence of glutamine and ATP through an activated phospho-Asp-tRNA(Asn) or phospho-Glu-tRNA(Gln). In Prochlorococcus marinus (strain MIT 9515), this protein is Aspartyl/glutamyl-tRNA(Asn/Gln) amidotransferase subunit B.